The following is a 92-amino-acid chain: Conotoxin Cal22f (92 aa).

The first 24 residues, 1 to 24 (MMSTKGITLFLCLLLLALATSVNG), serve as a signal peptide directing secretion. A propeptide spanning residues 25-44 (GQGTRRSRMTRALHGGRPSA) is cleaved from the precursor.

Contains 4 disulfide bonds. In terms of tissue distribution, expressed by the venom duct.

The protein localises to the secreted. Functionally, probable neurotoxin with unknown target. Possibly targets ion channels. This chain is Conotoxin Cal22f, found in Californiconus californicus (California cone).